Consider the following 299-residue polypeptide: Cysteine synthase B (299 aa).

Residue K40 is modified to N6-(pyridoxal phosphate)lysine. Residues N70, 174 to 178 (GTGGT), and S261 contribute to the pyridoxal 5'-phosphate site.

The protein belongs to the cysteine synthase/cystathionine beta-synthase family. Pyridoxal 5'-phosphate serves as cofactor.

The catalysed reaction is O-acetyl-L-serine + hydrogen sulfide = L-cysteine + acetate. It participates in amino-acid biosynthesis; L-cysteine biosynthesis; L-cysteine from L-serine: step 2/2. The sequence is that of Cysteine synthase B (cysM) from Campylobacter jejuni subsp. jejuni serotype O:2 (strain ATCC 700819 / NCTC 11168).